A 156-amino-acid polypeptide reads, in one-letter code: Protein SprT (156 aa).

The 139-residue stretch at 15 to 153 folds into the SprT-like domain; the sequence is NRYFNKHFTP…CKKCKEILVL (139 aa). Zn(2+) is bound at residue histidine 67. Glutamate 68 is a catalytic residue. Histidine 71 is a binding site for Zn(2+).

Belongs to the SprT family. The cofactor is Zn(2+).

The protein resides in the cytoplasm. In Glaesserella parasuis serovar 5 (strain SH0165) (Haemophilus parasuis), this protein is Protein SprT.